The primary structure comprises 216 residues: MQKFTVHKGLVAPMDRENVDTDAIIPKQFLKSIRKTGFGPNLFDAWRYLDAGFPGQDPASRKPNPDFVLNQPRYAGASILLARKNFGCGSSREHAPWALDQYGFRAIIAPSYADIFFNNSFKNGLLPIVLPEAQIAQLFDEVNAFPGYTLTIDLERQVIVKPQGKELPFEVQAFRKYCLLNGFDDIGLTLRQSDKIKAFEAERLAKKPWLNHTIPG.

The protein belongs to the LeuD family. LeuD type 1 subfamily. As to quaternary structure, heterodimer of LeuC and LeuD.

The enzyme catalyses (2R,3S)-3-isopropylmalate = (2S)-2-isopropylmalate. It functions in the pathway amino-acid biosynthesis; L-leucine biosynthesis; L-leucine from 3-methyl-2-oxobutanoate: step 2/4. Its function is as follows. Catalyzes the isomerization between 2-isopropylmalate and 3-isopropylmalate, via the formation of 2-isopropylmaleate. The sequence is that of 3-isopropylmalate dehydratase small subunit from Polaromonas sp. (strain JS666 / ATCC BAA-500).